A 97-amino-acid chain; its full sequence is Large ribosomal subunit protein bL28 (97 aa).

This sequence belongs to the bacterial ribosomal protein bL28 family.

This Rickettsia prowazekii (strain Madrid E) protein is Large ribosomal subunit protein bL28.